The chain runs to 110 residues: Cysteine-rich and transmembrane domain-containing protein 1 (110 aa).

Residues 1–18 (MNYENPPPYASPPAPYPP) are compositionally biased toward pro residues. Positions 1–45 (MNYENPPPYASPPAPYPPYGQQQPSYPVPNQYPGNPPGPVGYQPA) are disordered. The span at 19-29 (YGQQQPSYPVP) shows a compositional bias: low complexity. Residues 87 to 104 (SGESACLTACWTALCCCC) form a helical membrane-spanning segment.

It belongs to the CYSTM1 family.

The protein resides in the membrane. This is Cysteine-rich and transmembrane domain-containing protein 1 (cystm1) from Xenopus tropicalis (Western clawed frog).